The sequence spans 295 residues: Golgi-associated RAB2 interactor protein 1A (295 aa).

Residues 187–206 (MPNSSTETTPESSRPASSQS) form a disordered region. A compositionally biased stretch (low complexity) spans 190–206 (SSTETTPESSRPASSQS). Serine 220, serine 221, serine 251, and serine 255 each carry phosphoserine.

Belongs to the GARIN family. In terms of assembly, interacts (via N-terminus) with RAB2B (in GTP-bound form).

It is found in the golgi apparatus. Its function is as follows. RAB2B effector protein required for accurate acrosome formation and normal male fertility. This is Golgi-associated RAB2 interactor protein 1A (Garin1a) from Rattus norvegicus (Rat).